The chain runs to 315 residues: Glycine--tRNA ligase alpha subunit (315 aa).

It belongs to the class-II aminoacyl-tRNA synthetase family. As to quaternary structure, tetramer of two alpha and two beta subunits.

Its subcellular location is the cytoplasm. The enzyme catalyses tRNA(Gly) + glycine + ATP = glycyl-tRNA(Gly) + AMP + diphosphate. The sequence is that of Glycine--tRNA ligase alpha subunit from Pseudomonas putida (strain W619).